The primary structure comprises 350 residues: GDSL esterase/lipase At4g10955 (350 aa).

Belongs to the 'GDSL' lipolytic enzyme family.

The polypeptide is GDSL esterase/lipase At4g10955 (Arabidopsis thaliana (Mouse-ear cress)).